The primary structure comprises 222 residues: Isoprenyl transferase (222 aa).

Residue D12 is part of the active site. Residue D12 coordinates Mg(2+). Substrate contacts are provided by residues 13–16 (GNRR), W17, and 57–59 (STE). Catalysis depends on N60, which acts as the Proton acceptor. Substrate is bound by residues W61, R63, R171, and 177-179 (RLS). E190 is a binding site for Mg(2+).

Belongs to the UPP synthase family. As to quaternary structure, homodimer. It depends on Mg(2+) as a cofactor.

Catalyzes the condensation of isopentenyl diphosphate (IPP) with allylic pyrophosphates generating different type of terpenoids. The protein is Isoprenyl transferase (uppS) of Campylobacter jejuni subsp. jejuni serotype O:2 (strain ATCC 700819 / NCTC 11168).